The chain runs to 34 residues: Cytochrome b6-f complex subunit 5 (34 aa).

A helical transmembrane segment spans residues 5 to 25; sequence LLSGIVLGLVPVTLAGLFVTA.

It belongs to the PetG family. In terms of assembly, the 4 large subunits of the cytochrome b6-f complex are cytochrome b6, subunit IV (17 kDa polypeptide, PetD), cytochrome f and the Rieske protein, while the 4 small subunits are PetG, PetL, PetM and PetN. The complex functions as a dimer.

Its subcellular location is the plastid. It localises to the chloroplast thylakoid membrane. In terms of biological role, component of the cytochrome b6-f complex, which mediates electron transfer between photosystem II (PSII) and photosystem I (PSI), cyclic electron flow around PSI, and state transitions. PetG is required for either the stability or assembly of the cytochrome b6-f complex. The polypeptide is Cytochrome b6-f complex subunit 5 (Oltmannsiellopsis viridis (Marine flagellate)).